Consider the following 179-residue polypeptide: MSRIGKLPVDIPEKVDVSVNDNLVTVKGPKGELTKEFNNKKVTVEVKDGQVLVRRVHDKDKDARAFQGLTRSLIDSMVEGVTNGFEKKLEMVGVGYNAKKKGKDLELEVGYSHPVIIEAEDGIEFDVEKNNKIVVRGIDKQQVGEMAAKVRAVRKPEPYKGKGIRYEGEHIRRKEGKTG.

It belongs to the universal ribosomal protein uL6 family. As to quaternary structure, part of the 50S ribosomal subunit.

In terms of biological role, this protein binds to the 23S rRNA, and is important in its secondary structure. It is located near the subunit interface in the base of the L7/L12 stalk, and near the tRNA binding site of the peptidyltransferase center. This Halothermothrix orenii (strain H 168 / OCM 544 / DSM 9562) protein is Large ribosomal subunit protein uL6.